The primary structure comprises 889 residues: Cytoplasmic aconitate hydratase (889 aa).

Residues Q86 and 205-207 (DSH) each bind substrate. [4Fe-4S] cluster is bound by residues C437, C503, and C506. Substrate contacts are provided by residues R536, R541, R699, and 779 to 780 (SR).

Belongs to the aconitase/IPM isomerase family. In terms of assembly, interacts (when associated with the 4Fe-4S) with FBXL5. Interacts with frataxin(81-210). [4Fe-4S] cluster serves as cofactor.

It localises to the cytoplasm. The protein localises to the cytosol. The enzyme catalyses citrate = D-threo-isocitrate. Its function is as follows. Bifunctional iron sensor that switches between 2 activities depending on iron availability. Iron deprivation, promotes its mRNA binding activity through which it regulates the expression of genes involved in iron uptake, sequestration and utilization. Binds to iron-responsive elements (IRES) in the untranslated region of target mRNAs preventing for instance the translation of ferritin and aminolevulinic acid synthase and stabilizing the transferrin receptor mRNA. In terms of biological role, conversely, when cellular iron levels are high, binds a 4Fe-4S cluster which precludes RNA binding activity and promotes the aconitase activity, the isomerization of citrate to isocitrate via cis-aconitate. The polypeptide is Cytoplasmic aconitate hydratase (ACO1) (Oryctolagus cuniculus (Rabbit)).